A 284-amino-acid polypeptide reads, in one-letter code: CBY1-interacting BAR domain-containing protein 1-A (284 aa).

The N-terminal 48 residues, 1-48 (MSQTPEARARDNQTRQIQESVNNVEKHFGELCQIFAGYVRKTARLRDK), are a transit peptide targeting the mitochondrion. Residues 11-221 (DNQTRQIQES…DIDEEEDLEV (211 aa)) are BAR-like. 2 coiled-coil regions span residues 142-184 (RQII…IKKL) and 260-284 (NRQK…EDEN). Over residues 242 to 261 (SRTGSTSRGPSVISQPPGNR) the composition is skewed to polar residues. The tract at residues 242–284 (SRTGSTSRGPSVISQPPGNRQKNRIEDEDEEEEDDENSTEDEN) is disordered. Residues 267 to 284 (EDEDEEEEDDENSTEDEN) show a composition bias toward acidic residues.

The protein belongs to the CIBAR family.

It localises to the cytoplasm. The protein localises to the cytoskeleton. It is found in the microtubule organizing center. The protein resides in the centrosome. Its subcellular location is the centriole. It localises to the nucleus. The protein localises to the mitochondrion inner membrane. It is found in the cell projection. The protein resides in the cilium. Its subcellular location is the flagellum. Plays a critical role in regulating mitochondrial ultrastructure and function by maintaining the integrity of mitochondrial morphology, particularly the organization of cristae. Plays a crucial role in ciliogenesis. Plays a key role in the correct positioning of the annulus, a septin-based ring structure in the sperm flagellum, serving both as a physical barrier and a membrane diffusion barrier that separates the midpiece (MP) from the principal piece (PP). The protein is CBY1-interacting BAR domain-containing protein 1-A of Xenopus laevis (African clawed frog).